The chain runs to 420 residues: Zinc finger and BTB domain-containing protein 42 (420 aa).

A BTB domain is found at 24–92; that stretch reads CDCTVLVGDA…MYEGRLDLHS (69 aa). Disordered regions lie at residues 174–204 and 216–248; these read PPSW…HPPC and QGAQ…PPVC. The span at 227-241 shows a compositional bias: low complexity; sequence DSFSEQDSSSPQSAD. 4 C2H2-type zinc fingers span residues 292 to 314, 332 to 354, 360 to 382, and 388 to 411; these read CICP…LSAH, PTCP…ERTH, YTCV…AVVH, and HACR…RKFH.

This sequence belongs to the krueppel C2H2-type zinc-finger protein family. ZBTB18 subfamily.

It localises to the cytoplasm. It is found in the nucleus. The protein resides in the nucleoplasm. Transcriptional repressor. Specifically binds DNA and probably acts by recruiting chromatin remodeling multiprotein complexes. This Rattus norvegicus (Rat) protein is Zinc finger and BTB domain-containing protein 42 (Zbtb42).